Consider the following 80-residue polypeptide: Large ribosomal subunit protein bL31B (80 aa).

The protein belongs to the bacterial ribosomal protein bL31 family. Type B subfamily. Part of the 50S ribosomal subunit.

This is Large ribosomal subunit protein bL31B from Methylobacillus flagellatus (strain ATCC 51484 / DSM 6875 / VKM B-1610 / KT).